The sequence spans 331 residues: Glucokinase (331 aa).

Residue 16 to 21 participates in ATP binding; sequence GDIGGT.

This sequence belongs to the bacterial glucokinase family.

Its subcellular location is the cytoplasm. The enzyme catalyses D-glucose + ATP = D-glucose 6-phosphate + ADP + H(+). This chain is Glucokinase, found in Pseudomonas aeruginosa (strain LESB58).